The sequence spans 232 residues: 5'-methylthioadenosine/S-adenosylhomocysteine nucleosidase (232 aa).

The active-site Proton acceptor is Glu12. Substrate contacts are provided by residues Gly78, Ile152, and 173–174; that span reads ME. The active-site Proton donor is Asp197.

This sequence belongs to the PNP/UDP phosphorylase family. MtnN subfamily. In terms of assembly, homodimer.

The enzyme catalyses S-adenosyl-L-homocysteine + H2O = S-(5-deoxy-D-ribos-5-yl)-L-homocysteine + adenine. It carries out the reaction S-methyl-5'-thioadenosine + H2O = 5-(methylsulfanyl)-D-ribose + adenine. The catalysed reaction is 5'-deoxyadenosine + H2O = 5-deoxy-D-ribose + adenine. Its pathway is amino-acid biosynthesis; L-methionine biosynthesis via salvage pathway; S-methyl-5-thio-alpha-D-ribose 1-phosphate from S-methyl-5'-thioadenosine (hydrolase route): step 1/2. In terms of biological role, catalyzes the irreversible cleavage of the glycosidic bond in both 5'-methylthioadenosine (MTA) and S-adenosylhomocysteine (SAH/AdoHcy) to adenine and the corresponding thioribose, 5'-methylthioribose and S-ribosylhomocysteine, respectively. Also cleaves 5'-deoxyadenosine, a toxic by-product of radical S-adenosylmethionine (SAM) enzymes, into 5-deoxyribose and adenine. Thus, is required for in vivo function of the radical SAM enzymes biotin synthase and lipoic acid synthase, that are inhibited by 5'-deoxyadenosine accumulation. This Salmonella dublin (strain CT_02021853) protein is 5'-methylthioadenosine/S-adenosylhomocysteine nucleosidase.